The sequence spans 484 residues: Putative tyramine receptor 2 (484 aa).

The Extracellular portion of the chain corresponds to Met1–Thr54. Asn13 is a glycosylation site (N-linked (GlcNAc...) asparagine). A helical membrane pass occupies residues Ala55–Phe77. The Cytoplasmic portion of the chain corresponds to Thr78 to Asn87. Residues Phe88–Val109 traverse the membrane as a helical segment. At Ala110–Met126 the chain is on the extracellular side. A disulfide bridge connects residues Cys124 and Cys203. The helical transmembrane segment at Trp127–Leu147 threads the bilayer. The Cytoplasmic portion of the chain corresponds to Asp148–Arg167. A helical transmembrane segment spans residues Val168–Trp190. The Extracellular portion of the chain corresponds to Asn191–Ser215. N-linked (GlcNAc...) asparagine glycosylation is present at Asn198. Residues Ser216 to Ala237 traverse the membrane as a helical segment. Residues Thr238 to Thr411 lie on the Cytoplasmic side of the membrane. Residues Ser253–Thr280 show a composition bias toward polar residues. Disordered regions lie at residues Ser253 to Val322 and Thr350 to Val383. A compositionally biased stretch (basic residues) spans Glu295–Lys306. Low complexity predominate over residues Thr350 to Thr360. A compositionally biased stretch (polar residues) spans Ala361–Ala378. The helical transmembrane segment at Leu412–Val433 threads the bilayer. Residues Pro434–Asn448 lie on the Extracellular side of the membrane. The chain crosses the membrane as a helical span at residues Phe449–Leu470. Residues Asp471–Thr484 are Cytoplasmic-facing.

It belongs to the G-protein coupled receptor 1 family.

It is found in the cell membrane. Its function is as follows. G-protein coupled receptor for tyramine, a known neurotransmitter and neuromodulator and direct precursor of octopamine. In Locusta migratoria (Migratory locust), this protein is Putative tyramine receptor 2 (GCR2).